A 1297-amino-acid polypeptide reads, in one-letter code: Protein Atossa (1297 aa).

Disordered regions lie at residues 1–22 and 117–149; these read MIPT…GASA and TNPY…THQR. The segment covering 133–144 has biased composition (low complexity); the sequence is GSGSTGSPSSSS. The interval 174–182 is transactivation domain 1 (TAD1); sequence VSLAINDLN. Disordered regions lie at residues 206-227, 287-311, 518-655, 704-741, and 1017-1048; these read SSAG…NSSD, TPTT…KHGP, GLPH…ETQS, SNGT…SSAD, and AAHK…DLES. Low complexity-rich tracts occupy residues 213-226 and 287-305; these read NNSS…SNSS and TPTT…SSAS. Residues 564-578 are compositionally biased toward polar residues; it reads SALTPTTTAGGSNCD. Basic residues predominate over residues 605–620; the sequence is QKYRKRMQRRDKKRER. 2 stretches are compositionally biased toward low complexity: residues 643–655 and 706–716; these read SQTQ…ETQS and GTANGSTNGAT. Residues 717 to 731 show a composition bias toward acidic residues; that stretch reads DDGDDSDTTASEMEE. The required for macropage invasion stretch occupies residues 1074–1132; sequence LLGNLEESLLQRRLMPKIEVMGFTLQLGASGGFCPTQVNIPAVSYFYELHGETLSTPYL. Residues 1150-1158 are transactivation domain 2 (TAD2); sequence VQATLLNPI. Positions 1192–1213 are disordered; it reads SQDQDEGHKVPRSPTVTSTTSK. The span at 1203–1212 shows a compositional bias: low complexity; that stretch reads RSPTVTSTTS.

The protein belongs to the ATOS family. As to expression, expressed in macrophages.

It localises to the nucleus. In terms of biological role, transcription regulator that synchronizes transcriptional and translational programs to promote macrophage invasion of tissues. Required in macrophages for their early invasion into the extended germband. Induces transcriptional expression of metabolic enzymes as well as of the translational regulator pths/DDX47. With pths/DDX47, adjusts transcription and translation of a subset of OXPHOS genes to increase mitochondrial bioenergetics and allow macrophage tissue invasion. This chain is Protein Atossa, found in Drosophila melanogaster (Fruit fly).